Consider the following 233-residue polypeptide: 5'-methylthioadenosine/S-adenosylhomocysteine nucleosidase (233 aa).

Catalysis depends on Glu12, which acts as the Proton acceptor. Substrate is bound by residues Gly78, Ile152, and 173–174; that span reads ME. Asp197 (proton donor) is an active-site residue.

The protein belongs to the PNP/UDP phosphorylase family. MtnN subfamily. As to quaternary structure, homodimer.

The catalysed reaction is S-adenosyl-L-homocysteine + H2O = S-(5-deoxy-D-ribos-5-yl)-L-homocysteine + adenine. The enzyme catalyses S-methyl-5'-thioadenosine + H2O = 5-(methylsulfanyl)-D-ribose + adenine. It catalyses the reaction 5'-deoxyadenosine + H2O = 5-deoxy-D-ribose + adenine. It participates in amino-acid biosynthesis; L-methionine biosynthesis via salvage pathway; S-methyl-5-thio-alpha-D-ribose 1-phosphate from S-methyl-5'-thioadenosine (hydrolase route): step 1/2. Catalyzes the irreversible cleavage of the glycosidic bond in both 5'-methylthioadenosine (MTA) and S-adenosylhomocysteine (SAH/AdoHcy) to adenine and the corresponding thioribose, 5'-methylthioribose and S-ribosylhomocysteine, respectively. Also cleaves 5'-deoxyadenosine, a toxic by-product of radical S-adenosylmethionine (SAM) enzymes, into 5-deoxyribose and adenine. Thus, is required for in vivo function of the radical SAM enzymes biotin synthase and lipoic acid synthase, that are inhibited by 5'-deoxyadenosine accumulation. In Sodalis glossinidius (strain morsitans), this protein is 5'-methylthioadenosine/S-adenosylhomocysteine nucleosidase.